Reading from the N-terminus, the 919-residue chain is Glutamate receptor ionotropic, kainate 3 (919 aa).

The first 31 residues, 1–31 (MTAPWRRLRSLVWEYWAGFLVCAFWIPDSRG), serve as a signal peptide directing secretion. Topologically, residues 32–563 (MPHVIRIGGI…VFSFLNPLSP (532 aa)) are extracellular. 7 N-linked (GlcNAc...) asparagine glycosylation sites follow: asparagine 70, asparagine 76, asparagine 278, asparagine 381, asparagine 415, asparagine 426, and asparagine 433. An intrachain disulfide couples cysteine 99 to cysteine 350. 3 residues coordinate L-glutamate: proline 518, threonine 520, and arginine 525. 2 N-linked (GlcNAc...) asparagine glycosylation sites follow: asparagine 548 and asparagine 551. A helical membrane pass occupies residues 564 to 584 (DIWMYVLLAYLGVSCVLFVIA). Residues 585 to 636 (RFSPYEWYDAHPCNPGSEVVENNFTLLNSFWFGMGSLMQQGSELMPKALSTR) lie on the Cytoplasmic side of the membrane. A helical transmembrane segment spans residues 637–657 (IIGGIWWFFTLIIISSYTANL). Residues 658 to 820 (AAFLTVERME…KEASALGIQK (163 aa)) lie on the Extracellular side of the membrane. Residues alanine 691, threonine 692, and glutamate 739 each coordinate L-glutamate. N-linked (GlcNAc...) asparagine glycosylation occurs at asparagine 752. A helical transmembrane segment spans residues 821 to 841 (IGGIFIVLAAGLVLSVLVAVG). Topologically, residues 842–919 (EFIYKLRKTA…CSTSLAPVFP (78 aa)) are cytoplasmic. The residue at position 869 (serine 869) is a Phosphoserine. A Glycyl lysine isopeptide (Lys-Gly) (interchain with G-Cter in SUMO1) cross-link involves residue lysine 887.

The protein belongs to the glutamate-gated ion channel (TC 1.A.10.1) family. GRIK3 subfamily. As to quaternary structure, homotetramer, and heterotetramer with GRIK4 or GRIK5. Can form functional heteromeric receptors with GRIK2. Interacts with PRKCABP. Interacts with NETO2. In terms of assembly, homomeric GluR7A forms functional kainate receptors which have very low sensitivity to glutamate. Can form functional heteromeric receptors with GRIK4 and GRIK5. Homomeric GluR7B forms functional kainate receptors. Mass spectrometry data suggest the protein is N-glycosylated at five distinct sites. As to expression, expressed in the olfactory bulb (at protein level). Expressed in the deep cortical layers, dentate gyrus, reticular thalamic nucleus, mammillary bodies, pons, and cerebellum of the adult.

It is found in the cell membrane. The protein localises to the postsynaptic cell membrane. The enzyme catalyses Ca(2+)(in) = Ca(2+)(out). Its function is as follows. Ionotropic glutamate receptor that functions as a cation-permeable ligand-gated ion channel, gated by L-glutamate and the glutamatergic agonist kainic acid. Binding of the excitatory neurotransmitter L-glutamate induces a conformation change, leading to the opening of the cation channel, and thereby converts the chemical signal to an electrical impulse. The receptor then desensitizes rapidly and enters a transient inactive state, characterized by the presence of bound agonist. In association with GRIK2, involved in presynaptic facilitation of glutamate release at hippocampal mossy fiber synapses. Ionotropic glutamate receptor that functions as a ligand-gated cation channel, gated by L-glutamate and the glutamatergic agonist kainic acid. This Rattus norvegicus (Rat) protein is Glutamate receptor ionotropic, kainate 3 (Grik3).